Here is a 296-residue protein sequence, read N- to C-terminus: Nicotinate dehydrogenase FAD-subunit (296 aa).

Residues 1–179 (MKDFEFFAPK…TEVIIDRPDA (179 aa)) enclose the FAD-binding PCMH-type domain. Residues 29-36 (IIAGGTDL), G101, 110-114 (TIGGN), D123, R160, M169, and K187 each bind FAD.

As to quaternary structure, heterooctamer of NDHM, NDHL, NDHS and NDHF. Dimer of heterotetramers. FAD serves as cofactor.

The catalysed reaction is nicotinate + NADP(+) + H2O = 6-hydroxynicotinate + NADPH + H(+). The protein operates within cofactor degradation; nicotinate degradation; 6-hydroxynicotinate from nicotinate: step 1/1. Reversibly inactivated by selenide and sulfide. Not inhibited by cyanide. In terms of biological role, catalyzes the hydroxylation of nicotinate to 6-hydroxynicotinate. Also active against 2-pyrazinecarboxylic acid, but inactive against other nicotinate analogs. The chain is Nicotinate dehydrogenase FAD-subunit (ndhF) from Eubacterium barkeri (Clostridium barkeri).